A 343-amino-acid chain; its full sequence is Methionine import ATP-binding protein MetN (343 aa).

Residues 2–241 (IKLFHINKIF…PKTPIAQAFI (240 aa)) form the ABC transporter domain. 38-45 (GSSGAGKS) contributes to the ATP binding site.

This sequence belongs to the ABC transporter superfamily. Methionine importer (TC 3.A.1.24) family. In terms of assembly, the complex is composed of two ATP-binding proteins (MetN), two transmembrane proteins (MetI) and a solute-binding protein (MetQ).

It is found in the cell inner membrane. It catalyses the reaction L-methionine(out) + ATP + H2O = L-methionine(in) + ADP + phosphate + H(+). The catalysed reaction is D-methionine(out) + ATP + H2O = D-methionine(in) + ADP + phosphate + H(+). Functionally, part of the ABC transporter complex MetNIQ involved in methionine import. Responsible for energy coupling to the transport system. This Photorhabdus laumondii subsp. laumondii (strain DSM 15139 / CIP 105565 / TT01) (Photorhabdus luminescens subsp. laumondii) protein is Methionine import ATP-binding protein MetN.